The following is a 436-amino-acid chain: Glutamyl-tRNA reductase (436 aa).

Substrate contacts are provided by residues 49–52 (TCNR), S118, 123–125 (EPQ), and Q129. Catalysis depends on C50, which acts as the Nucleophile. 203 to 208 (GAGETI) serves as a coordination point for NADP(+).

Belongs to the glutamyl-tRNA reductase family. As to quaternary structure, homodimer.

It carries out the reaction (S)-4-amino-5-oxopentanoate + tRNA(Glu) + NADP(+) = L-glutamyl-tRNA(Glu) + NADPH + H(+). It functions in the pathway porphyrin-containing compound metabolism; protoporphyrin-IX biosynthesis; 5-aminolevulinate from L-glutamyl-tRNA(Glu): step 1/2. In terms of biological role, catalyzes the NADPH-dependent reduction of glutamyl-tRNA(Glu) to glutamate 1-semialdehyde (GSA). The chain is Glutamyl-tRNA reductase from Actinobacillus pleuropneumoniae serotype 7 (strain AP76).